We begin with the raw amino-acid sequence, 310 residues long: tRNA pseudouridine synthase B (310 aa).

Catalysis depends on D47, which acts as the Nucleophile.

It belongs to the pseudouridine synthase TruB family. Type 1 subfamily.

It catalyses the reaction uridine(55) in tRNA = pseudouridine(55) in tRNA. Functionally, responsible for synthesis of pseudouridine from uracil-55 in the psi GC loop of transfer RNAs. This is tRNA pseudouridine synthase B from Psychromonas ingrahamii (strain DSM 17664 / CCUG 51855 / 37).